The primary structure comprises 71 residues: Large ribosomal subunit protein uL29 (71 aa).

The protein belongs to the universal ribosomal protein uL29 family.

In Synechococcus sp. (strain RCC307), this protein is Large ribosomal subunit protein uL29.